The chain runs to 101 residues: Aspartyl/glutamyl-tRNA(Asn/Gln) amidotransferase subunit C (101 aa).

Belongs to the GatC family. As to quaternary structure, heterotrimer of A, B and C subunits.

It carries out the reaction L-glutamyl-tRNA(Gln) + L-glutamine + ATP + H2O = L-glutaminyl-tRNA(Gln) + L-glutamate + ADP + phosphate + H(+). The catalysed reaction is L-aspartyl-tRNA(Asn) + L-glutamine + ATP + H2O = L-asparaginyl-tRNA(Asn) + L-glutamate + ADP + phosphate + 2 H(+). Functionally, allows the formation of correctly charged Asn-tRNA(Asn) or Gln-tRNA(Gln) through the transamidation of misacylated Asp-tRNA(Asn) or Glu-tRNA(Gln) in organisms which lack either or both of asparaginyl-tRNA or glutaminyl-tRNA synthetases. The reaction takes place in the presence of glutamine and ATP through an activated phospho-Asp-tRNA(Asn) or phospho-Glu-tRNA(Gln). This is Aspartyl/glutamyl-tRNA(Asn/Gln) amidotransferase subunit C from Lactococcus lactis subsp. cremoris (strain SK11).